A 352-amino-acid polypeptide reads, in one-letter code: uncharacterized protein (352 aa).

Positions 1 to 21 (MNVDSRVFRFFLVFLILVVVA) are cleaved as a signal peptide.

Belongs to the bacterial solute-binding protein 1 family. WtpA subfamily.

This is an uncharacterized protein from Methanosarcina acetivorans (strain ATCC 35395 / DSM 2834 / JCM 12185 / C2A).